The sequence spans 95 residues: Co-chaperonin GroES (95 aa).

This sequence belongs to the GroES chaperonin family. Heptamer of 7 subunits arranged in a ring. Interacts with the chaperonin GroEL.

It localises to the cytoplasm. In terms of biological role, together with the chaperonin GroEL, plays an essential role in assisting protein folding. The GroEL-GroES system forms a nano-cage that allows encapsulation of the non-native substrate proteins and provides a physical environment optimized to promote and accelerate protein folding. GroES binds to the apical surface of the GroEL ring, thereby capping the opening of the GroEL channel. The sequence is that of Co-chaperonin GroES from Rickettsia felis (strain ATCC VR-1525 / URRWXCal2) (Rickettsia azadi).